Reading from the N-terminus, the 256-residue chain is UPF0246 protein PG_1544 (256 aa).

This sequence belongs to the UPF0246 family.

This Porphyromonas gingivalis (strain ATCC BAA-308 / W83) protein is UPF0246 protein PG_1544.